A 640-amino-acid chain; its full sequence is MPVSLTPNAITAIHDGDVNLKPLLQVLEIKMIGRSQERSQERYRFLISDGVSAQHAMVAVQLNDRVKSGQFEKGSIVQLIDYICSDVKGRKLIVVLNMETIVQQSETIGNPTIFGETDTEAQKTFSGTGNIPPPNRVVFNEPMVQHSVNRAPPRGVNIQNQANNTPSFRPSVQPSYQPPASYRNHGPIMKNEAPARVIPIAALNPYQGRWAIKARVTAKGDIRRYNNAKGDGKVFSFDLLDYDGGEIRVTCFNALVDRFYDVTEVGKVYLISKGSLKPAQKNFNHLKNEWEIFLESTSTVELCPDEDGSIPKQQFSFRPISDIENAENNTILDVIGVVTSVNPSVPILRKNGMETHRRILNLKDESGKAVEVTLWGEFCNRDGRQLEEMVDSAFHPVLAIKAGKVSDFSGKSVGTISSTQLFINPDFPEAHKLRTWFDYGGKDTASFSISRDTMPGGVSRNEIRKNVSQIKEEGLGRSDKPDWITVKATISFIKTDSFCYTACPLMIGDKQCNKKVTRSGTNRWLCDRCNQESDECDYRYLLQVQIQDHTGLTWITAFQETGEEIMGCPAKKLYAMKYELEKEEEFAEIVRDRLFHQYMLKLKIKEESYGDEQRVKMTVVKVDKVNYTSESKYMLDLLVR.

A DNA-binding region (OB) is located at residues 211–293 (AIKARVTAKG…NHLKNEWEIF (83 aa)). Residues 503–529 (CPLMIGDKQCNKKVTRSGTNRWLCDRC) form a C4-type zinc finger.

This sequence belongs to the replication factor A protein 1 family. As to quaternary structure, heterotrimer of RPA1, RPA2 and RPA3 (canonical replication protein A complex). Interacts with RPA2A. As to expression, expressed in roots, leaves, stalks and flower buds.

It is found in the nucleus. In terms of biological role, component of the replication protein A complex (RPA) required for DNA recombination, repair and replication. The activity of RPA is mediated by single-stranded DNA binding and protein interactions. Plays an essential role at later stages of meiotic recombination events required for the formation of class I crossovers. Is essential for normal progression through meiosis in pollen mother cells. Is involved in repair of double-strand DNA breaks (DSBs) induced by genotoxic stresses, but does not seem to be required for the repair of meiotic DSBs. This chain is Replication protein A 70 kDa DNA-binding subunit A (RPA1A), found in Arabidopsis thaliana (Mouse-ear cress).